The sequence spans 1293 residues: Late blight resistance protein R1-A (1293 aa).

2 coiled-coil regions span residues 423–446 and 538–560; these read RYSD…ESLQ and PRMN…KLLN. An NB-ARC domain is found at 539-826; the sequence is RMNEEIVGFE…SEAFIKSSEG (288 aa). 572–579 provides a ligand contact to ATP; it reads GMPGLGKT. LRR repeat units follow at residues 876-899, 956-981, 1027-1049, 1056-1079, 1102-1125, 1149-1172, 1175-1197, 1198-1222, and 1235-1259; these read AEEN…VYSH, FKFL…VYLK, MVKL…LLEN, LETL…KTPN, PIRL…ISAP, LKHL…KVSN, FPQL…ADDA, FPNL…FMDI, and ESVV…NFKL.

The protein belongs to the disease resistance NB-LRR family.

It localises to the cytoplasm. The protein resides in the membrane. Functionally, confers resistance to late blight (Phytophthora infestans) races carrying the avirulence gene Avr1. Resistance proteins guard the plant against pathogens that contain an appropriate avirulence protein via an indirect interaction with this avirulence protein. That triggers a defense system including the hypersensitive response, which restricts the pathogen growth. In Solanum demissum (Wild potato), this protein is Late blight resistance protein R1-A (R1A).